The following is a 120-amino-acid chain: Large ribosomal subunit protein bL20 (120 aa).

Belongs to the bacterial ribosomal protein bL20 family.

In terms of biological role, binds directly to 23S ribosomal RNA and is necessary for the in vitro assembly process of the 50S ribosomal subunit. It is not involved in the protein synthesizing functions of that subunit. This Methylacidiphilum infernorum (isolate V4) (Methylokorus infernorum (strain V4)) protein is Large ribosomal subunit protein bL20.